The chain runs to 729 residues: Fatty acid oxidation complex subunit alpha (729 aa).

The segment at 1–189 (MLYKGDTLYL…KIGLVDGVVK (189 aa)) is enoyl-CoA hydratase/isomerase. Asp296 contributes to the substrate binding site. A 3-hydroxyacyl-CoA dehydrogenase region spans residues 311 to 729 (ETPKQAAVLG…ARPVGSLKTA (419 aa)). Residues Met324, Asp343, 400-402 (VVE), Lys407, and Ser429 contribute to the NAD(+) site. His450 (for 3-hydroxyacyl-CoA dehydrogenase activity) is an active-site residue. Asn453 is a binding site for NAD(+). Residues Asn500 and Tyr660 each coordinate substrate. Residues 708 to 729 (RHNEPYYPPVEPARPVGSLKTA) form a disordered region.

In the N-terminal section; belongs to the enoyl-CoA hydratase/isomerase family. It in the C-terminal section; belongs to the 3-hydroxyacyl-CoA dehydrogenase family. Heterotetramer of two alpha chains (FadB) and two beta chains (FadA).

It catalyses the reaction a (3S)-3-hydroxyacyl-CoA + NAD(+) = a 3-oxoacyl-CoA + NADH + H(+). The enzyme catalyses a (3S)-3-hydroxyacyl-CoA = a (2E)-enoyl-CoA + H2O. It carries out the reaction a 4-saturated-(3S)-3-hydroxyacyl-CoA = a (3E)-enoyl-CoA + H2O. The catalysed reaction is (3S)-3-hydroxybutanoyl-CoA = (3R)-3-hydroxybutanoyl-CoA. It catalyses the reaction a (3Z)-enoyl-CoA = a 4-saturated (2E)-enoyl-CoA. The enzyme catalyses a (3E)-enoyl-CoA = a 4-saturated (2E)-enoyl-CoA. The protein operates within lipid metabolism; fatty acid beta-oxidation. In terms of biological role, involved in the aerobic and anaerobic degradation of long-chain fatty acids via beta-oxidation cycle. Catalyzes the formation of 3-oxoacyl-CoA from enoyl-CoA via L-3-hydroxyacyl-CoA. It can also use D-3-hydroxyacyl-CoA and cis-3-enoyl-CoA as substrate. The protein is Fatty acid oxidation complex subunit alpha of Salmonella enteritidis PT4 (strain P125109).